The following is a 261-amino-acid chain: uncharacterized protein (261 aa).

Belongs to the BtpA family.

This is an uncharacterized protein from Methanocaldococcus jannaschii (strain ATCC 43067 / DSM 2661 / JAL-1 / JCM 10045 / NBRC 100440) (Methanococcus jannaschii).